A 266-amino-acid chain; its full sequence is Glucosamine-6-phosphate deaminase (266 aa).

The active-site Proton acceptor; for enolization step is the aspartate 72. Aspartate 141 acts as the For ring-opening step in catalysis. Histidine 143 functions as the Proton acceptor; for ring-opening step in the catalytic mechanism. Glutamate 148 (for ring-opening step) is an active-site residue.

It belongs to the glucosamine/galactosamine-6-phosphate isomerase family. NagB subfamily. Homohexamer; trimer of disulfide-linked dimers.

It catalyses the reaction alpha-D-glucosamine 6-phosphate + H2O = beta-D-fructose 6-phosphate + NH4(+). The protein operates within amino-sugar metabolism; N-acetylneuraminate degradation; D-fructose 6-phosphate from N-acetylneuraminate: step 5/5. Allosterically activated by N-acetylglucosamine 6-phosphate (GlcNAc6P). Catalyzes the reversible isomerization-deamination of glucosamine 6-phosphate (GlcN6P) to form fructose 6-phosphate (Fru6P) and ammonium ion. The chain is Glucosamine-6-phosphate deaminase from Shigella flexneri serotype 5b (strain 8401).